The following is a 212-amino-acid chain: Cytidylate kinase (212 aa).

ATP is bound at residue 7–15 (GPAASGKGT).

The protein belongs to the cytidylate kinase family. Type 1 subfamily.

The protein resides in the cytoplasm. It carries out the reaction CMP + ATP = CDP + ADP. It catalyses the reaction dCMP + ATP = dCDP + ADP. This is Cytidylate kinase from Rhodopseudomonas palustris (strain BisB18).